The following is a 286-amino-acid chain: Pyridoxal kinase PdxY (286 aa).

Substrate contacts are provided by residues serine 9 and 44–45 (TQ). ATP-binding positions include aspartate 111, alanine 143, glutamate 148, lysine 181, and 208–211 (RPLV). Aspartate 222 provides a ligand contact to substrate.

This sequence belongs to the pyridoxine kinase family. PdxY subfamily. In terms of assembly, homodimer. Requires Mg(2+) as cofactor.

It catalyses the reaction pyridoxal + ATP = pyridoxal 5'-phosphate + ADP + H(+). It participates in cofactor metabolism; pyridoxal 5'-phosphate salvage; pyridoxal 5'-phosphate from pyridoxal: step 1/1. Pyridoxal kinase involved in the salvage pathway of pyridoxal 5'-phosphate (PLP). Catalyzes the phosphorylation of pyridoxal to PLP. This chain is Pyridoxal kinase PdxY, found in Pectobacterium atrosepticum (strain SCRI 1043 / ATCC BAA-672) (Erwinia carotovora subsp. atroseptica).